The sequence spans 128 residues: Large ribosomal subunit protein bL17 (128 aa).

Belongs to the bacterial ribosomal protein bL17 family. Part of the 50S ribosomal subunit. Contacts protein L32.

The sequence is that of Large ribosomal subunit protein bL17 from Streptococcus equi subsp. zooepidemicus (strain H70).